A 546-amino-acid chain; its full sequence is Probable protein kinase UbiB (546 aa).

The Protein kinase domain occupies 124–502 (DFEIKPLASA…HVRQGQSRYF (379 aa)). Residues 130–138 (LASASIAQV) and Lys-153 each bind ATP. The active-site Proton acceptor is Asp-288. Helical transmembrane passes span 501–521 (YFLGIGATLVLSGTFLLVSRP) and 522–542 (EWGLMPGWLMAGGLIAWFVGW).

The protein belongs to the ABC1 family. UbiB subfamily.

It localises to the cell inner membrane. It functions in the pathway cofactor biosynthesis; ubiquinone biosynthesis [regulation]. Functionally, is probably a protein kinase regulator of UbiI activity which is involved in aerobic coenzyme Q (ubiquinone) biosynthesis. In Escherichia coli O127:H6 (strain E2348/69 / EPEC), this protein is Probable protein kinase UbiB.